Reading from the N-terminus, the 341-residue chain is Holliday junction branch migration complex subunit RuvB (341 aa).

A disordered region spans residues 1–22; it reads MSETAGKGVTMPEIMQSSYPDE. Positions 4 to 193 are large ATPase domain (RuvB-L); sequence TAGKGVTMPE…FGIISRLEFY (190 aa). ATP contacts are provided by residues isoleucine 32, arginine 33, glycine 74, lysine 77, threonine 78, threonine 79, 140–142, arginine 183, tyrosine 193, and arginine 230; that span reads EDY. Mg(2+) is bound at residue threonine 78. A small ATPAse domain (RuvB-S) region spans residues 194 to 264; it reads TPEELSQIIL…LVNHALQKLD (71 aa). A head domain (RuvB-H) region spans residues 267–341; the sequence is EKGLDQMDRK…KAYKHLNLTD (75 aa). DNA contacts are provided by arginine 322 and arginine 327.

This sequence belongs to the RuvB family. Homohexamer. Forms an RuvA(8)-RuvB(12)-Holliday junction (HJ) complex. HJ DNA is sandwiched between 2 RuvA tetramers; dsDNA enters through RuvA and exits via RuvB. An RuvB hexamer assembles on each DNA strand where it exits the tetramer. Each RuvB hexamer is contacted by two RuvA subunits (via domain III) on 2 adjacent RuvB subunits; this complex drives branch migration. In the full resolvosome a probable DNA-RuvA(4)-RuvB(12)-RuvC(2) complex forms which resolves the HJ.

It localises to the cytoplasm. It carries out the reaction ATP + H2O = ADP + phosphate + H(+). Its function is as follows. The RuvA-RuvB-RuvC complex processes Holliday junction (HJ) DNA during genetic recombination and DNA repair, while the RuvA-RuvB complex plays an important role in the rescue of blocked DNA replication forks via replication fork reversal (RFR). RuvA specifically binds to HJ cruciform DNA, conferring on it an open structure. The RuvB hexamer acts as an ATP-dependent pump, pulling dsDNA into and through the RuvAB complex. RuvB forms 2 homohexamers on either side of HJ DNA bound by 1 or 2 RuvA tetramers; 4 subunits per hexamer contact DNA at a time. Coordinated motions by a converter formed by DNA-disengaged RuvB subunits stimulates ATP hydrolysis and nucleotide exchange. Immobilization of the converter enables RuvB to convert the ATP-contained energy into a lever motion, pulling 2 nucleotides of DNA out of the RuvA tetramer per ATP hydrolyzed, thus driving DNA branch migration. The RuvB motors rotate together with the DNA substrate, which together with the progressing nucleotide cycle form the mechanistic basis for DNA recombination by continuous HJ branch migration. Branch migration allows RuvC to scan DNA until it finds its consensus sequence, where it cleaves and resolves cruciform DNA. In Lawsonia intracellularis (strain PHE/MN1-00), this protein is Holliday junction branch migration complex subunit RuvB.